The following is a 211-amino-acid chain: NADH-quinone oxidoreductase subunit I (211 aa).

The tract at residues 1–27 is disordered; it reads MANTDRPALPHKRAVPPSRADSGPRRR. 4Fe-4S ferredoxin-type domains are found at residues 71–101 and 117–146; these read LNRY…VEGA and RVYQ…MTYD. Residues Cys81, Cys84, Cys87, Cys91, Cys126, Cys129, Cys132, and Cys136 each coordinate [4Fe-4S] cluster.

This sequence belongs to the complex I 23 kDa subunit family. As to quaternary structure, NDH-1 is composed of 14 different subunits. Subunits NuoA, H, J, K, L, M, N constitute the membrane sector of the complex. [4Fe-4S] cluster is required as a cofactor.

It is found in the cell membrane. It catalyses the reaction a quinone + NADH + 5 H(+)(in) = a quinol + NAD(+) + 4 H(+)(out). Functionally, NDH-1 shuttles electrons from NADH, via FMN and iron-sulfur (Fe-S) centers, to quinones in the respiratory chain. The immediate electron acceptor for the enzyme in this species is believed to be menaquinone. Couples the redox reaction to proton translocation (for every two electrons transferred, four hydrogen ions are translocated across the cytoplasmic membrane), and thus conserves the redox energy in a proton gradient. The protein is NADH-quinone oxidoreductase subunit I of Mycobacterium tuberculosis (strain ATCC 25177 / H37Ra).